Reading from the N-terminus, the 218-residue chain is Glycerol-3-phosphate acyltransferase (218 aa).

The next 5 membrane-spanning stretches (helical) occupy residues 4-24 (IALG…AILI), 54-74 (TAAI…WLAY), 80-100 (PFYL…PIFF), 107-127 (GVAT…GLMM), and 130-150 (WLLT…SALI).

This sequence belongs to the PlsY family. In terms of assembly, probably interacts with PlsX.

It localises to the cell inner membrane. The enzyme catalyses an acyl phosphate + sn-glycerol 3-phosphate = a 1-acyl-sn-glycero-3-phosphate + phosphate. The protein operates within lipid metabolism; phospholipid metabolism. In terms of biological role, catalyzes the transfer of an acyl group from acyl-phosphate (acyl-PO(4)) to glycerol-3-phosphate (G3P) to form lysophosphatidic acid (LPA). This enzyme utilizes acyl-phosphate as fatty acyl donor, but not acyl-CoA or acyl-ACP. The chain is Glycerol-3-phosphate acyltransferase from Photorhabdus laumondii subsp. laumondii (strain DSM 15139 / CIP 105565 / TT01) (Photorhabdus luminescens subsp. laumondii).